Reading from the N-terminus, the 359-residue chain is 3-dehydroquinate synthase (359 aa).

NAD(+) is bound by residues 72–77, 106–110, 130–131, Lys143, and Lys152; these read DGEHYK, GVIGD, and TT. Zn(2+)-binding residues include Glu185, His248, and His265.

Belongs to the sugar phosphate cyclases superfamily. Dehydroquinate synthase family. It depends on Co(2+) as a cofactor. Requires Zn(2+) as cofactor. NAD(+) is required as a cofactor.

The protein resides in the cytoplasm. The catalysed reaction is 7-phospho-2-dehydro-3-deoxy-D-arabino-heptonate = 3-dehydroquinate + phosphate. The protein operates within metabolic intermediate biosynthesis; chorismate biosynthesis; chorismate from D-erythrose 4-phosphate and phosphoenolpyruvate: step 2/7. Catalyzes the conversion of 3-deoxy-D-arabino-heptulosonate 7-phosphate (DAHP) to dehydroquinate (DHQ). The protein is 3-dehydroquinate synthase of Thermodesulfovibrio yellowstonii (strain ATCC 51303 / DSM 11347 / YP87).